A 1057-amino-acid polypeptide reads, in one-letter code: Desmoglein-1-alpha (1057 aa).

The N-terminal stretch at 1-23 is a signal peptide; that stretch reads MDWHSFRIAALLLTSLVVLEVNS. A propeptide spanning residues 24–49 is cleaved from the precursor; that stretch reads EFQIQVRDHNAKNGTIKWHSIRRQKR. 4 Cadherin domains span residues 50–157, 158–269, 270–389, and 386–493; these read EWIK…PPVF, SMTT…IPYL, EQSS…RPGS, and RPGS…TGSE. Residues 50 to 564 are Extracellular-facing; the sequence is EWIKFAAACR…LYGDNVHFGP (515 aa). N-linked (GlcNAc...) asparagine glycosylation is found at N110 and N180. A disordered region spans residues 490–552; the sequence is TGSESGGSSS…FQGDPDETLE (63 aa). Polar residues predominate over residues 510–525; that stretch reads NGYQGTSSTENPQRVT. A helical membrane pass occupies residues 565–585; it reads AGIGLLIMGFLVLGLVPFLLI. Residues 586–1057 lie on the Cytoplasmic side of the membrane; sequence CCDCGGAPGG…TKYNTVQYSK (472 aa). 5 Desmoglein repeat repeats span residues 832–858, 859–888, 889–918, 919–946, and 947–975; these read AYHS…TVRE, SYTT…ERVV, GPIS…ERVI, APGS…ERVI, and QPTS…ERVV.

Binds to JUP/plakoglobin. Interacts with PKP2. Interacts with DSC3; there is evidence to suggest that the interaction promotes cell-cell adhesion of keratinocytes. In terms of tissue distribution, expressed in testis.

The protein resides in the cell membrane. Its subcellular location is the cell junction. The protein localises to the desmosome. It localises to the cytoplasm. It is found in the nucleus. In terms of biological role, component of intercellular desmosome junctions. Involved in the interaction of plaque proteins and intermediate filaments mediating cell-cell adhesion. The chain is Desmoglein-1-alpha (Dsg1a) from Mus musculus (Mouse).